A 366-amino-acid polypeptide reads, in one-letter code: Phospho-N-acetylmuramoyl-pentapeptide-transferase (366 aa).

The next 10 membrane-spanning stretches (helical) occupy residues Ala27–Leu47, Thr71–Ala91, Leu93–Phe113, Leu134–Ala154, Phe174–Gly194, Gly205–Ala225, Leu245–Pro265, Ala268–Val288, Ile294–Val314, and Gln343–Leu363.

Belongs to the glycosyltransferase 4 family. MraY subfamily. It depends on Mg(2+) as a cofactor.

The protein resides in the cell inner membrane. The catalysed reaction is UDP-N-acetyl-alpha-D-muramoyl-L-alanyl-gamma-D-glutamyl-meso-2,6-diaminopimeloyl-D-alanyl-D-alanine + di-trans,octa-cis-undecaprenyl phosphate = di-trans,octa-cis-undecaprenyl diphospho-N-acetyl-alpha-D-muramoyl-L-alanyl-D-glutamyl-meso-2,6-diaminopimeloyl-D-alanyl-D-alanine + UMP. Its pathway is cell wall biogenesis; peptidoglycan biosynthesis. In terms of biological role, catalyzes the initial step of the lipid cycle reactions in the biosynthesis of the cell wall peptidoglycan: transfers peptidoglycan precursor phospho-MurNAc-pentapeptide from UDP-MurNAc-pentapeptide onto the lipid carrier undecaprenyl phosphate, yielding undecaprenyl-pyrophosphoryl-MurNAc-pentapeptide, known as lipid I. This chain is Phospho-N-acetylmuramoyl-pentapeptide-transferase, found in Rhizobium etli (strain CIAT 652).